Consider the following 390-residue polypeptide: GTPase Obg (390 aa).

The region spanning 1 to 159 is the Obg domain; the sequence is MKFVDEATIL…RELMLELLLL (159 aa). The region spanning 160-333 is the OBG-type G domain; sequence ADVGMLGLPN…LCWDVMNFLN (174 aa). GTP-binding positions include 166–173, 191–195, 213–216, 283–286, and 314–316; these read GLPNAGKS, FTTLI, DIPG, NKID, and SAA. Mg(2+) contacts are provided by Ser-173 and Thr-193. Acidic residues predominate over residues 363–384; sequence EVEAEAESEDDDDWDEEDDDGV. Positions 363–390 are disordered; that stretch reads EVEAEAESEDDDDWDEEDDDGVEFIYER.

It belongs to the TRAFAC class OBG-HflX-like GTPase superfamily. OBG GTPase family. In terms of assembly, monomer. It depends on Mg(2+) as a cofactor.

It is found in the cytoplasm. Functionally, an essential GTPase which binds GTP, GDP and possibly (p)ppGpp with moderate affinity, with high nucleotide exchange rates and a fairly low GTP hydrolysis rate. Plays a role in control of the cell cycle, stress response, ribosome biogenesis and in those bacteria that undergo differentiation, in morphogenesis control. This chain is GTPase Obg, found in Yersinia enterocolitica serotype O:8 / biotype 1B (strain NCTC 13174 / 8081).